Consider the following 192-residue polypeptide: Protein GrpE (192 aa).

Residues 1 to 41 (MSKEEFPHEKDLKDEVTPDKAPKKDPKAAPKEEVKENPVEN) form a disordered region.

The protein belongs to the GrpE family. As to quaternary structure, homodimer.

The protein resides in the cytoplasm. In terms of biological role, participates actively in the response to hyperosmotic and heat shock by preventing the aggregation of stress-denatured proteins, in association with DnaK and GrpE. It is the nucleotide exchange factor for DnaK and may function as a thermosensor. Unfolded proteins bind initially to DnaJ; upon interaction with the DnaJ-bound protein, DnaK hydrolyzes its bound ATP, resulting in the formation of a stable complex. GrpE releases ADP from DnaK; ATP binding to DnaK triggers the release of the substrate protein, thus completing the reaction cycle. Several rounds of ATP-dependent interactions between DnaJ, DnaK and GrpE are required for fully efficient folding. This Lactobacillus johnsonii (strain CNCM I-12250 / La1 / NCC 533) protein is Protein GrpE.